The following is an 84-amino-acid chain: Hydramacin-1 (84 aa).

The N-terminal stretch at 1–24 (MRTVVFFILVSIFLVALKPTGTQA) is a signal peptide. Gln25 is subject to Pyrrolidone carboxylic acid. Disulfide bonds link Cys29/Cys72, Cys36/Cys65, Cys51/Cys81, and Cys55/Cys83.

As to expression, expressed in the endodermal epithelium.

It is found in the secreted. Its subcellular location is the target cell membrane. Cationic antimicrobial peptide potently active against Gram-positive and Gram-negative bacteria including multi-resistant human pathogenic strains. Is not active against the Gram-positive Coccus species, Gram-negative non-fermentation species and against the fungus C.albicans. It leads to aggregation of bacteria as an initial step of its bactericidal mechanism. Aggregated cells are connected via electron-dense contacts and adopt a thorn apple-like morphology. Hydramycin contains a belt of positively charged residues that separate two hydrophobic areas. This structure may explain the observed aggregation of bacteria, since each of these areas can immerse into the outer leaflets of the membranes of two individual bacteria. Is able to permeabilize membranes of viable bacteria at low and neutral pH values, but no pore-forming activity is not detected. The protein is Hydramacin-1 of Hydra vulgaris (Hydra).